The chain runs to 365 residues: Histidine biosynthesis bifunctional protein HisB (365 aa).

The histidinol-phosphatase stretch occupies residues 1 to 176; it reads MTQQPTLFID…VADPKGLGQP (176 aa). Asp-10 serves as the catalytic Nucleophile. Positions 10 and 12 each coordinate Mg(2+). Asp-12 functions as the Proton donor in the catalytic mechanism. Positions 93, 95, 101, and 103 each coordinate Zn(2+). Asp-130 contacts Mg(2+). Residues 177-365 form an imidazoleglycerol-phosphate dehydratase region; that stretch reads RHAVVARKTK…NEMPSSKGVL (189 aa).

The protein in the N-terminal section; belongs to the histidinol-phosphatase family. This sequence in the C-terminal section; belongs to the imidazoleglycerol-phosphate dehydratase family. Requires Mg(2+) as cofactor. Zn(2+) is required as a cofactor.

It localises to the cytoplasm. It carries out the reaction D-erythro-1-(imidazol-4-yl)glycerol 3-phosphate = 3-(imidazol-4-yl)-2-oxopropyl phosphate + H2O. The enzyme catalyses L-histidinol phosphate + H2O = L-histidinol + phosphate. The protein operates within amino-acid biosynthesis; L-histidine biosynthesis; L-histidine from 5-phospho-alpha-D-ribose 1-diphosphate: step 6/9. It participates in amino-acid biosynthesis; L-histidine biosynthesis; L-histidine from 5-phospho-alpha-D-ribose 1-diphosphate: step 8/9. This chain is Histidine biosynthesis bifunctional protein HisB, found in Mannheimia succiniciproducens (strain KCTC 0769BP / MBEL55E).